We begin with the raw amino-acid sequence, 264 residues long: TLC domain-containing protein 2 (264 aa).

The next 6 helical transmembrane spans lie at 3-23 (PTGL…HWGL), 42-62 (LCVS…GLSL), 77-97 (WALV…ADLL), 114-134 (VVVS…FSMV), 169-189 (SLAT…LWLF), and 199-219 (LVTL…ILGI). Residues 34–227 (RDRWQWWNLC…GIRILVNDVL (194 aa)) enclose the TLC domain. Positions 230–264 (RPHPPSPGHEKTRGTRTRRDNGPVTSNSSTLSLKD) are disordered. The segment covering 237-250 (GHEKTRGTRTRRDN) has biased composition (basic and acidic residues). The span at 252–264 (PVTSNSSTLSLKD) shows a compositional bias: polar residues.

It belongs to the TLCD family.

Its subcellular location is the cell membrane. Its function is as follows. Regulates the composition and fluidity of the plasma membrane. Inhibits the incorporation of membrane-fluidizing phospholipids containing omega-3 long-chain polyunsaturated fatty acids (LCPUFA) and thereby promotes membrane rigidity. Does not appear to have any effect on LCPUFA synthesis. This is TLC domain-containing protein 2 (TLCD2) from Homo sapiens (Human).